Reading from the N-terminus, the 107-residue chain is Integration host factor subunit alpha (107 aa).

It belongs to the bacterial histone-like protein family. As to quaternary structure, heterodimer of an alpha and a beta chain.

Its function is as follows. This protein is one of the two subunits of integration host factor, a specific DNA-binding protein that functions in genetic recombination as well as in transcriptional and translational control. In Brucella anthropi (strain ATCC 49188 / DSM 6882 / CCUG 24695 / JCM 21032 / LMG 3331 / NBRC 15819 / NCTC 12168 / Alc 37) (Ochrobactrum anthropi), this protein is Integration host factor subunit alpha.